We begin with the raw amino-acid sequence, 384 residues long: Carbamoyl phosphate synthase small chain (384 aa).

The segment at 1–193 (MTKPATTPAI…DSHPEIPASE (193 aa)) is CPSase. 3 residues coordinate L-glutamine: Ser-51, Gly-245, and Gly-247. The 188-residue stretch at 197-384 (HVVAYDYGVK…ISAMAPVVDR (188 aa)) folds into the Glutamine amidotransferase type-1 domain. Cys-273 (nucleophile) is an active-site residue. Positions 274, 277, 315, 317, and 318 each coordinate L-glutamine. Active-site residues include His-357 and Glu-359.

It belongs to the CarA family. In terms of assembly, composed of two chains; the small (or glutamine) chain promotes the hydrolysis of glutamine to ammonia, which is used by the large (or ammonia) chain to synthesize carbamoyl phosphate. Tetramer of heterodimers (alpha,beta)4.

The catalysed reaction is hydrogencarbonate + L-glutamine + 2 ATP + H2O = carbamoyl phosphate + L-glutamate + 2 ADP + phosphate + 2 H(+). It catalyses the reaction L-glutamine + H2O = L-glutamate + NH4(+). Its pathway is amino-acid biosynthesis; L-arginine biosynthesis; carbamoyl phosphate from bicarbonate: step 1/1. It functions in the pathway pyrimidine metabolism; UMP biosynthesis via de novo pathway; (S)-dihydroorotate from bicarbonate: step 1/3. In terms of biological role, small subunit of the glutamine-dependent carbamoyl phosphate synthetase (CPSase). CPSase catalyzes the formation of carbamoyl phosphate from the ammonia moiety of glutamine, carbonate, and phosphate donated by ATP, constituting the first step of 2 biosynthetic pathways, one leading to arginine and/or urea and the other to pyrimidine nucleotides. The small subunit (glutamine amidotransferase) binds and cleaves glutamine to supply the large subunit with the substrate ammonia. In Stutzerimonas stutzeri (Pseudomonas stutzeri), this protein is Carbamoyl phosphate synthase small chain.